A 331-amino-acid chain; its full sequence is Ribosomal RNA small subunit methyltransferase H (331 aa).

S-adenosyl-L-methionine is bound by residues glycine 48–histidine 50, aspartate 67, aspartate 115, and glutamine 122. The segment at arginine 297–alanine 331 is disordered. A compositionally biased stretch (basic and acidic residues) spans glycine 298–arginine 312.

This sequence belongs to the methyltransferase superfamily. RsmH family.

Its subcellular location is the cytoplasm. It catalyses the reaction cytidine(1402) in 16S rRNA + S-adenosyl-L-methionine = N(4)-methylcytidine(1402) in 16S rRNA + S-adenosyl-L-homocysteine + H(+). Its function is as follows. Specifically methylates the N4 position of cytidine in position 1402 (C1402) of 16S rRNA. The protein is Ribosomal RNA small subunit methyltransferase H of Micrococcus luteus (strain ATCC 4698 / DSM 20030 / JCM 1464 / CCM 169 / CCUG 5858 / IAM 1056 / NBRC 3333 / NCIMB 9278 / NCTC 2665 / VKM Ac-2230) (Micrococcus lysodeikticus).